Here is a 637-residue protein sequence, read N- to C-terminus: DNA gyrase subunit B (637 aa).

One can recognise a Toprim domain in the interval 422 to 536 (CEVYIVEGDS…AGYVYLAMPP (115 aa)). Mg(2+) is bound by residues glutamate 428, aspartate 501, and aspartate 503.

Belongs to the type II topoisomerase GyrB family. In terms of assembly, heterotetramer, composed of two GyrA and two GyrB chains. In the heterotetramer, GyrA contains the active site tyrosine that forms a transient covalent intermediate with DNA, while GyrB binds cofactors and catalyzes ATP hydrolysis. Mg(2+) is required as a cofactor. It depends on Mn(2+) as a cofactor. Requires Ca(2+) as cofactor.

The protein localises to the cytoplasm. The catalysed reaction is ATP-dependent breakage, passage and rejoining of double-stranded DNA.. A type II topoisomerase that negatively supercoils closed circular double-stranded (ds) DNA in an ATP-dependent manner to modulate DNA topology and maintain chromosomes in an underwound state. Negative supercoiling favors strand separation, and DNA replication, transcription, recombination and repair, all of which involve strand separation. Also able to catalyze the interconversion of other topological isomers of dsDNA rings, including catenanes and knotted rings. Type II topoisomerases break and join 2 DNA strands simultaneously in an ATP-dependent manner. This chain is DNA gyrase subunit B, found in Treponema pallidum (strain Nichols).